The sequence spans 171 residues: UPF0398 protein M28_Spy1394 (171 aa).

It belongs to the UPF0398 family.

The polypeptide is UPF0398 protein M28_Spy1394 (Streptococcus pyogenes serotype M28 (strain MGAS6180)).